The chain runs to 186 residues: Elongation factor P (186 aa).

It belongs to the elongation factor P family.

The protein localises to the cytoplasm. It functions in the pathway protein biosynthesis; polypeptide chain elongation. Functionally, involved in peptide bond synthesis. Stimulates efficient translation and peptide-bond synthesis on native or reconstituted 70S ribosomes in vitro. Probably functions indirectly by altering the affinity of the ribosome for aminoacyl-tRNA, thus increasing their reactivity as acceptors for peptidyl transferase. The protein is Elongation factor P of Prochlorococcus marinus (strain MIT 9215).